The sequence spans 553 residues: Serine/threonine-protein phosphatase 2B catalytic subunit A1 (553 aa).

Ser-2 carries the post-translational modification N-acetylserine. Fe cation is bound by residues Asp-119, His-121, and Asp-147. Positions 147 and 179 each coordinate Zn(2+). His-180 functions as the Proton donor in the catalytic mechanism. The Zn(2+) site is built by His-228 and His-317. The segment at 413–447 is disordered; sequence LDPESEPKAAEETVKARANATKETGTPSDEKASSA. A compositionally biased stretch (basic and acidic residues) spans 417 to 427; it reads SEPKAAEETVK.

The protein belongs to the PPP phosphatase family. PP-2B subfamily. As to quaternary structure, composed of two components (A and B), the A component is the catalytic subunit and the B component confers calcium sensitivity. Fe(3+) is required as a cofactor. It depends on Zn(2+) as a cofactor.

It catalyses the reaction O-phospho-L-seryl-[protein] + H2O = L-seryl-[protein] + phosphate. The catalysed reaction is O-phospho-L-threonyl-[protein] + H2O = L-threonyl-[protein] + phosphate. Calcium-dependent, calmodulin-stimulated protein phosphatase. This subunit may have a role in the calmodulin activation of calcineurin. In Saccharomyces cerevisiae (strain ATCC 204508 / S288c) (Baker's yeast), this protein is Serine/threonine-protein phosphatase 2B catalytic subunit A1 (CNA1).